The following is a 323-amino-acid chain: tRNA dimethylallyltransferase (323 aa).

12–19 is an ATP binding site; sequence GPTAAGKT. 14-19 lines the substrate pocket; it reads TAAGKT. 2 interaction with substrate tRNA regions span residues 37-40 and 161-165; these read DSAL and QRLIR.

It belongs to the IPP transferase family. Monomer. Requires Mg(2+) as cofactor.

The catalysed reaction is adenosine(37) in tRNA + dimethylallyl diphosphate = N(6)-dimethylallyladenosine(37) in tRNA + diphosphate. Functionally, catalyzes the transfer of a dimethylallyl group onto the adenine at position 37 in tRNAs that read codons beginning with uridine, leading to the formation of N6-(dimethylallyl)adenosine (i(6)A). The protein is tRNA dimethylallyltransferase of Pseudomonas putida (strain GB-1).